The sequence spans 81 residues: Kunitz-type serine protease inhibitor BmKTT-2 (81 aa).

Residues 1-21 form the signal peptide; the sequence is MMNVITVVGIILSVVCTISDA. One can recognise a BPTI/Kunitz inhibitor domain in the interval 26–76; the sequence is CTLPSDTGRCKAYFIRYFYNQKAGECQKFVYGGCEGNSNNFLTKSDCCKQC. Intrachain disulfides connect C26/C76, C35/C59, C51/C72, and C73/C81.

This sequence belongs to the venom Kunitz-type family. Scorpion delta-Ktx subfamily. Delta-Ktx 3 sub-subfamily. In terms of tissue distribution, expressed by the venom gland.

The protein localises to the secreted. Functionally, multifunctional toxin which inhibits serine proteases and potassium channels. Potently inhibits plasmin (Ki=8.75 nM), trypsin, chymotrypsin and elastase. Also inhibits mKv1.3/KCNA3 potassium channel currents (IC(50)=371.3 nM). This Olivierus martensii (Manchurian scorpion) protein is Kunitz-type serine protease inhibitor BmKTT-2.